A 102-amino-acid chain; its full sequence is Putative defensin-like protein 152 (102 aa).

A signal peptide spans 1-29 (MKKASQLSTTILTIFIVLAIGMMVKGTVG). 4 disulfide bridges follow: Cys-34-Cys-93, Cys-51-Cys-71, Cys-56-Cys-87, and Cys-60-Cys-89.

The protein belongs to the DEFL family.

It is found in the secreted. The sequence is that of Putative defensin-like protein 152 (LCR11) from Arabidopsis thaliana (Mouse-ear cress).